The following is a 1198-amino-acid chain: Fibronectin type-III domain-containing protein 3A (1198 aa).

A compositionally biased stretch (basic and acidic residues) spans 188–201; the sequence is KKLKDRQGTQKDKM. The segment at 188–257 is disordered; sequence KKLKDRQGTQ…VDPEMEEKDE (70 aa). Phosphoserine is present on residues Ser-203, Ser-207, and Ser-213. Fibronectin type-III domains lie at 268 to 369, 373 to 465, 469 to 562, 566 to 660, 664 to 757, 761 to 851, 863 to 950, 951 to 1045, and 1049 to 1151; these read NIVK…TLSC, PPNA…TSGC, VPAS…TCPD, VPVK…TPAV, PCLP…TAPG, QCRP…TPPS, SDDD…TKPL, PPDP…TPKS, and ALKA…TEPP. Residue Lys-384 is modified to N6-acetyllysine. A helical membrane pass occupies residues 1177-1197; that stretch reads ILVVFAFFSILIAFIIQYFVI.

Belongs to the FNDC3 family. Testis. Localizes to the acrosome of spermatids, as well as to Leydig cells. Can be detected on the acrosome beginning at steps 2-3 and continuing until step 12 of spermiogenesis.

Its subcellular location is the golgi apparatus membrane. Functionally, mediates spermatid-Sertoli adhesion during spermatogenesis. This is Fibronectin type-III domain-containing protein 3A (Fndc3a) from Mus musculus (Mouse).